The primary structure comprises 102 residues: Urease subunit beta (102 aa).

Belongs to the urease beta subunit family. In terms of assembly, heterotrimer of UreA (gamma), UreB (beta) and UreC (alpha) subunits. Three heterotrimers associate to form the active enzyme.

It localises to the cytoplasm. It catalyses the reaction urea + 2 H2O + H(+) = hydrogencarbonate + 2 NH4(+). It functions in the pathway nitrogen metabolism; urea degradation; CO(2) and NH(3) from urea (urease route): step 1/1. The sequence is that of Urease subunit beta from Bordetella parapertussis (strain 12822 / ATCC BAA-587 / NCTC 13253).